Here is a 208-residue protein sequence, read N- to C-terminus: Receptor expression-enhancing protein 6 (208 aa).

3 consecutive transmembrane segments (helical) span residues 49 to 69 (GAFL…GFVY), 93 to 113 (WVIY…LHWF), and 115 to 135 (FYYV…SWNG). Positions 187 to 208 (VGPAESEPRSLPSSAHTEPTVD) are disordered. A compositionally biased stretch (polar residues) spans 197–208 (LPSSAHTEPTVD).

The protein belongs to the DP1 family.

It localises to the endoplasmic reticulum membrane. The protein localises to the cytoplasmic vesicle. It is found in the clathrin-coated vesicle membrane. Functionally, required correct function and survival of retinal photoreceptors. Required for retinal development. In rod photoreceptors, facilitates stability and/or trafficking of guanylate cyclases and is required to maintain endoplasmic reticulum and mitochondrial homeostasis. May play a role in clathrin-coated intracellular vesicle trafficking of proteins from the endoplasmic reticulum to the retinal rod plasma membrane. In Danio rerio (Zebrafish), this protein is Receptor expression-enhancing protein 6.